The sequence spans 103 residues: Large ribosomal subunit protein bL21 (103 aa).

The protein belongs to the bacterial ribosomal protein bL21 family. In terms of assembly, part of the 50S ribosomal subunit. Contacts protein L20.

Its function is as follows. This protein binds to 23S rRNA in the presence of protein L20. This chain is Large ribosomal subunit protein bL21, found in Shewanella piezotolerans (strain WP3 / JCM 13877).